The sequence spans 119 residues: Hydrogenase maturation factor HypA (119 aa).

Residue histidine 2 participates in Ni(2+) binding. Zn(2+)-binding residues include cysteine 73, cysteine 76, cysteine 89, and cysteine 92.

It belongs to the HypA/HybF family.

In terms of biological role, involved in the maturation of [NiFe] hydrogenases. Required for nickel insertion into the metal center of the hydrogenase. The chain is Hydrogenase maturation factor HypA from Cupriavidus necator (strain ATCC 17699 / DSM 428 / KCTC 22496 / NCIMB 10442 / H16 / Stanier 337) (Ralstonia eutropha).